Here is a 196-residue protein sequence, read N- to C-terminus: Pantothenic acid transporter PanT (196 aa).

6 helical membrane passes run 10–30, 35–55, 58–78, 99–119, 131–151, and 161–181; these read AILA…QFVI, FPVK…ILGW, GAFL…IVTT, WGLF…YFVY, AAFA…FLFF, and YLLG…AVIL.

In terms of assembly, in E.coli forms a stable energy-coupling factor (ECF) transporter complex composed of 2 membrane-embedded substrate-binding protein (S component), 2 ATP-binding proteins (A and A' components) and 2 transmembrane proteins (T component), probably with a stoichiometry of 2:1:1:2. May be able to interact with more than 1 S component at a time.

It localises to the cell membrane. Probably a pantothenic acid-binding protein that interacts with the energy-coupling factor (ECF) ABC-transporter complex. Unlike classic ABC transporters this ECF transporter provides the energy necessary to transport a number of different substrates. The substrates themselves are bound by transmembrane, not extracytoplasmic soluble proteins. This Lactococcus lactis subsp. cremoris (strain MG1363) protein is Pantothenic acid transporter PanT (panT).